The chain runs to 183 residues: Ion-translocating oxidoreductase complex subunit B (183 aa).

The tract at residues 1-23 (MLSALLVMAAIAVVLGAALGFAA) is hydrophobic. The region spanning 29–88 (EGDPLVDKIDAILPQTQCGQCGYPGCKPYAQAIAQGEADINQCPPGGEEGVRKLADLLGR) is the 4Fe-4S domain. The [4Fe-4S] cluster site is built by Cys-46, Cys-49, Cys-54, Cys-71, Cys-113, Cys-116, Cys-119, Cys-123, Cys-143, Cys-146, Cys-149, and Cys-153. 4Fe-4S ferredoxin-type domains lie at 104–133 (AVAYIDENVCIGCTLCLQACPVDAIVGAAK) and 135–163 (MHTVVDPLCTGCELCVAPCPVDCIYMEPV).

The protein belongs to the 4Fe4S bacterial-type ferredoxin family. RnfB subfamily. As to quaternary structure, the complex is composed of six subunits: RnfA, RnfB, RnfC, RnfD, RnfE and RnfG. Requires [4Fe-4S] cluster as cofactor.

It is found in the cell inner membrane. Part of a membrane-bound complex that couples electron transfer with translocation of ions across the membrane. In Azoarcus sp. (strain BH72), this protein is Ion-translocating oxidoreductase complex subunit B.